A 95-amino-acid polypeptide reads, in one-letter code: Aspartyl/glutamyl-tRNA(Asn/Gln) amidotransferase subunit C (95 aa).

The protein belongs to the GatC family. In terms of assembly, heterotrimer of A, B and C subunits.

It catalyses the reaction L-glutamyl-tRNA(Gln) + L-glutamine + ATP + H2O = L-glutaminyl-tRNA(Gln) + L-glutamate + ADP + phosphate + H(+). It carries out the reaction L-aspartyl-tRNA(Asn) + L-glutamine + ATP + H2O = L-asparaginyl-tRNA(Asn) + L-glutamate + ADP + phosphate + 2 H(+). Functionally, allows the formation of correctly charged Asn-tRNA(Asn) or Gln-tRNA(Gln) through the transamidation of misacylated Asp-tRNA(Asn) or Glu-tRNA(Gln) in organisms which lack either or both of asparaginyl-tRNA or glutaminyl-tRNA synthetases. The reaction takes place in the presence of glutamine and ATP through an activated phospho-Asp-tRNA(Asn) or phospho-Glu-tRNA(Gln). This chain is Aspartyl/glutamyl-tRNA(Asn/Gln) amidotransferase subunit C, found in Nitrosomonas europaea (strain ATCC 19718 / CIP 103999 / KCTC 2705 / NBRC 14298).